A 162-amino-acid chain; its full sequence is uncharacterized protein (162 aa).

Positions 1 to 21 (MEGIMKKFFALMTLIAGISFS) are cleaved as a signal peptide. A coiled-coil region spans residues 32 to 118 (VIRESKFIAK…KKAELEKMVF (87 aa)).

The protein belongs to the Skp family.

This is an uncharacterized protein from Aquifex aeolicus (strain VF5).